The following is a 586-amino-acid chain: Terminase, large subunit (586 aa).

Positions 1–229 are ATPase activity; sequence MSTQSNRNAL…TIIWPALYPR (229 aa). The Walker A motif signature appears at 58–65; it reads AFRGIGKS. A Walker B motif motif is present at residues 156-161; it reads IIIADD. Residues 344-429 are nuclease activity; it reads HSYHSCSQNT…ESNFGDGMFG (86 aa). The Mg(2+) site is built by Asp364, Glu420, and Asp518. The involved in prohead binding stretch occupies residues 571–586; that stretch reads LYWEDDDVNGDRFINW.

The protein belongs to the Teseptimavirus large terminase family. In terms of assembly, homopentamer. Interacts with the terminase small subunit; the active complex is probably heterooligomeric. Interacts with the portal protein. Requires Mg(2+) as cofactor.

The terminase large subunit acts as an ATP driven molecular motor necessary for viral DNA translocation into empty capsids and as an endonuclease that cuts the viral genome at a unique and precise dsDNA sequence to initiate and to end a packaging reaction. The terminase lies at a unique vertex of the procapsid and is composed of two subunits, a small terminase subunit involved in viral DNA recognition (packaging sequence), and a large terminase subunit possessing endonucleolytic and ATPase activities. Both terminase subunits heterooligomerize and are docked on the portal protein to form the packaging machine. The terminase large subunit exhibits endonuclease activity and cleaves the viral genome concatemer. Once the DNA is packaged, the terminase detaches from the connector and gets replaced by the tail to finish maturation of the virion. The chain is Terminase, large subunit (19) from Escherichia coli (Bacteriophage T3).